The sequence spans 493 residues: Glutamate synthase [NADPH] small chain (493 aa).

Gly299–Arg313 serves as a coordination point for NADP(+).

The protein belongs to the glutamate synthase family. As to quaternary structure, aggregate of 4 catalytic active heterodimers, consisting of a large and a small subunit.

The catalysed reaction is 2 L-glutamate + NADP(+) = L-glutamine + 2-oxoglutarate + NADPH + H(+). It participates in amino-acid biosynthesis; L-glutamate biosynthesis via GLT pathway; L-glutamate from 2-oxoglutarate and L-glutamine (NADP(+) route): step 1/1. It functions in the pathway energy metabolism; nitrogen metabolism. The sequence is that of Glutamate synthase [NADPH] small chain (gltB) from Bacillus subtilis (strain 168).